A 217-amino-acid polypeptide reads, in one-letter code: Pro-Pro endopeptidase (217 aa).

A signal peptide spans 1-27; that stretch reads MKWDKRVVALILAVMIVCPLFAAPAHA. The ATLF-like domain occupies 30 to 216; the sequence is QSILDKLVVL…TYEFMAKLFA (187 aa). The interval 112 to 115 is plays a crucial role in substrate specificity; that stretch reads SERV. His-137 contacts Zn(2+). Glu-138 serves as the catalytic Proton acceptor. Positions 141, 174, and 181 each coordinate Zn(2+).

This sequence belongs to the peptidase M34 family. Pro-Pro endopeptidase subfamily. Monomer. Requires Zn(2+) as cofactor.

It localises to the secreted. The enzyme catalyses The enzyme catalyzes the hydrolytic cleavage of peptide bonds between two proline residues.. In terms of biological role, zinc-dependent endoprotease with a unique preference for proline residues surrounding the scissile bond, which cleaves in a PLP-|-PVP motif. Cleaves the cell surface protein encoded by an adjacent gene, which contains two PPEP-2 cleaving sites and putative extracellular matrix-binding domains. Thereby, may have a role in the regulation of P.alvei adhesion. Is not able to cleave within the PVP-|-PVQ motif, and only shows a very poor cleavage of the VNP-|-PVP motif in vitro, which is the optimal substrate peptide for PPEP-1 from P.difficile. The protein is Pro-Pro endopeptidase of Paenibacillus alvei (strain ATCC 6344 / DSM 29 / NBRC 3343 / NCIMB 9371 / NCTC 6352) (Bacillus alvei).